Reading from the N-terminus, the 213-residue chain is Uridine kinase (213 aa).

15–22 (GASASGKS) contacts ATP.

The protein belongs to the uridine kinase family.

Its subcellular location is the cytoplasm. It catalyses the reaction uridine + ATP = UMP + ADP + H(+). The catalysed reaction is cytidine + ATP = CMP + ADP + H(+). It functions in the pathway pyrimidine metabolism; CTP biosynthesis via salvage pathway; CTP from cytidine: step 1/3. Its pathway is pyrimidine metabolism; UMP biosynthesis via salvage pathway; UMP from uridine: step 1/1. This is Uridine kinase from Proteus mirabilis (strain HI4320).